The sequence spans 600 residues: MCGIVGYIGNEDAKEILLSGLEKLEYRGYDSAGIAVRTESDTEVFKEKGRIATLRKAVDENVHSTVGIGHTRWATHGVPSQLNAHPHQSATERYTLVHNGVIENYEQIKRDYLADVQLKSDTDTEVIVQFIEQLAGEGLTTEEAVSKALSLMKGSYAIALLDKDDPDTIFVGKNKSPLLVGVGENANVVASDAMAMLTVTDQFIEIMDEELVIVRRDRIEIKTLAGDVQERKPYTAELDVSDIEKGTYAHFMLKEIDEQPFVIRNIIQKYQHEDGSTRLDEDIRAAMKDSDRIYIVAAGTSYHAGLVGKQLLERVSGKPTEVHIASEFLYNMPLLSEKPLFVFISQSGETADSRGVLVNVKKQGHRTLTITNVPGSTLSREADYTLHTFAGPEIAVASTKAYTAQIAVLALLAVDVANAAGKTLDFDLLQELAIAANAMESLCNQKDEMEQIARDYLSVTRNAFFIGRTADYFVALEGALKLKEISYIQAEGFAGGELKHGTIALIEDGTPVIALATQEHVNLSIRGNVQEVASRGAATAIISMEGLDQEGDAVVLPRVHELLTPLVSVIPTQLIAYYAALHRGCDVDKPRNLAKSVTVE.

The active-site Nucleophile; for GATase activity is Cys2. A Glutamine amidotransferase type-2 domain is found at 2 to 217 (CGIVGYIGNE…DEELVIVRRD (216 aa)). SIS domains are found at residues 283-422 (IRAA…AAGK) and 452-590 (IARD…VDKP). Lys595 functions as the For Fru-6P isomerization activity in the catalytic mechanism.

As to quaternary structure, homodimer.

The protein resides in the cytoplasm. It carries out the reaction D-fructose 6-phosphate + L-glutamine = D-glucosamine 6-phosphate + L-glutamate. Catalyzes the first step in hexosamine metabolism, converting fructose-6P into glucosamine-6P using glutamine as a nitrogen source. This Shouchella clausii (strain KSM-K16) (Alkalihalobacillus clausii) protein is Glutamine--fructose-6-phosphate aminotransferase [isomerizing].